Consider the following 601-residue polypeptide: Protein nubbin (601 aa).

The segment covering 1 to 25 (MVMSELRWHTASPEDNKNSLKRDLL) has biased composition (basic and acidic residues). Disordered stretches follow at residues 1–32 (MVMSELRWHTASPEDNKNSLKRDLLKSTPTSA), 49–94 (SRSP…AKRQ), 121–158 (KQEEDYDDANGGALNLTSDNSRHSTQSPSNSVKSATAS), 351–425 (PASS…ETTD), and 581–601 (INPSLDSPTGADDDESSYMMH). The segment covering 49–68 (SRSPSPLQSNASDCDDNNSS) has biased composition (low complexity). Over residues 135-157 (NLTSDNSRHSTQSPSNSVKSATA) the composition is skewed to polar residues. The span at 384–415 (TPSTPTSGTQMSQGTTTPQPKTVASAAAARAA) shows a compositional bias: low complexity. A POU-specific domain is found at 421-495 (EETTDLEELE…LLQKWLDDAD (75 aa)). Positions 523–582 (RRKKRTSIETTIRGALEKAFLANQKPTSEEITQLADRLSMEKEVVRVWFCNRRQKEKRIN) form a DNA-binding region, homeobox. Residues 591 to 601 (ADDDESSYMMH) are compositionally biased toward acidic residues.

This sequence belongs to the POU transcription factor family. Class-2 subfamily. As to expression, initial expression in cellular blastoderm stage, then in ectodermal stripes during germband extension. Broad expression in the neuroectoderm followed by limitation to discrete subsets of CNS cells, and expression in specific PNS neurons and support cells.

The protein resides in the nucleus. In terms of biological role, DNA-binding regulatory protein implicated in early development. Involved in neuronal cell fate decision. Repressed directly or indirectly by the BX-C homeotic proteins. The chain is Protein nubbin (nub) from Drosophila melanogaster (Fruit fly).